We begin with the raw amino-acid sequence, 103 residues long: Small ribosomal subunit protein uS10 (103 aa).

Belongs to the universal ribosomal protein uS10 family. As to quaternary structure, part of the 30S ribosomal subunit.

In terms of biological role, involved in the binding of tRNA to the ribosomes. The polypeptide is Small ribosomal subunit protein uS10 (Baumannia cicadellinicola subsp. Homalodisca coagulata).